The primary structure comprises 175 residues: Adenylate kinase isoenzyme 6 homolog (175 aa).

Gly17, Gly19, Lys20, Thr21, and Ser22 together coordinate ATP. The segment at Asp37–Leu60 is NMPbind. Residues Lys112–Asn122 are LID. Arg113 contributes to the ATP binding site.

This sequence belongs to the adenylate kinase family. AK6 subfamily. Monomer and homodimer. Interacts with small ribosomal subunit protein uS11. Not a structural component of 43S pre-ribosomes, but transiently interacts with them by binding to uS11.

The protein localises to the cytoplasm. Its subcellular location is the nucleus. The enzyme catalyses AMP + ATP = 2 ADP. It carries out the reaction ATP + H2O = ADP + phosphate + H(+). In terms of biological role, broad-specificity nucleoside monophosphate (NMP) kinase that catalyzes the reversible transfer of the terminal phosphate group between nucleoside triphosphates and monophosphates. Also has ATPase activity. Involved in the late cytoplasmic maturation steps of the 40S ribosomal particles, specifically 18S rRNA maturation. While NMP activity is not required for ribosome maturation, ATPase activity is. Associates transiently with small ribosomal subunit protein uS11. ATP hydrolysis breaks the interaction with uS11. May temporarily remove uS11 from the ribosome to enable a conformational change of the ribosomal RNA that is needed for the final maturation step of the small ribosomal subunit. Its NMP activity may have a role in nuclear energy homeostasis. In Dictyostelium discoideum (Social amoeba), this protein is Adenylate kinase isoenzyme 6 homolog.